The chain runs to 535 residues: Heat shock factor protein 2 (535 aa).

Glycyl lysine isopeptide (Lys-Gly) (interchain with G-Cter in SUMO2) cross-links involve residues Lys2, Lys82, Lys135, Lys139, Lys151, Lys210, Lys218, and Lys237. Residues 7–112 (VPAFLSKLWT…LLENIKRKVS (106 aa)) mediate DNA binding. Residues 119-192 (NKIRQEDLTK…VTLVQNNQLV (74 aa)) are hydrophobic repeat HR-A/B. The tract at residues 298 to 325 (QSGEQSEPAREPLRVGSAGSSSPLMSSA) is disordered. Over residues 313–325 (GSAGSSSPLMSSA) the composition is skewed to low complexity. Residues 359 to 384 (LLDYLDSIDCSLEDFQAMLSGRQFSI) are hydrophobic repeat HR-C. A disordered region spans residues 418-437 (TKSSVVQHVSEEGRKSKSKP). Over residues 426 to 437 (VSEEGRKSKSKP) the composition is skewed to basic and acidic residues.

This sequence belongs to the HSF family. In terms of assembly, DNA-binding homotrimer in stressed or heat shocked cells, otherwise found as a homodimer. Isoform alpha is expressed predominantly in testis while isoform beta is expressed predominantly in heart and brain.

It is found in the cytoplasm. The protein localises to the nucleus. In terms of biological role, DNA-binding protein that specifically binds heat shock promoter elements (HSE) and activates transcription. In higher eukaryotes, HSF is unable to bind to the HSE unless the cells are heat shocked. HSF2 is expressed in a form that binds DNA constitutively but loses DNA binding by incubation at greater than 41 degrees C. This chain is Heat shock factor protein 2 (Hsf2), found in Mus musculus (Mouse).